The following is a 356-amino-acid chain: Histidinol-phosphate aminotransferase (356 aa).

Position 217 is an N6-(pyridoxal phosphate)lysine (Lys-217).

The protein belongs to the class-II pyridoxal-phosphate-dependent aminotransferase family. Histidinol-phosphate aminotransferase subfamily. Homodimer. Pyridoxal 5'-phosphate is required as a cofactor.

It catalyses the reaction L-histidinol phosphate + 2-oxoglutarate = 3-(imidazol-4-yl)-2-oxopropyl phosphate + L-glutamate. It functions in the pathway amino-acid biosynthesis; L-histidine biosynthesis; L-histidine from 5-phospho-alpha-D-ribose 1-diphosphate: step 7/9. In Chromobacterium violaceum (strain ATCC 12472 / DSM 30191 / JCM 1249 / CCUG 213 / NBRC 12614 / NCIMB 9131 / NCTC 9757 / MK), this protein is Histidinol-phosphate aminotransferase.